A 564-amino-acid polypeptide reads, in one-letter code: Pyruvate decarboxylase (564 aa).

Positions 28 and 115 each coordinate pyruvate. Residues T390 and 413–415 (GSI) each bind thiamine diphosphate. D444 serves as a coordination point for Mg(2+). Thiamine diphosphate contacts are provided by residues 445–446 (GS) and 471–476 (NDGYTI). N471 and G473 together coordinate Mg(2+). E477 is a pyruvate binding site.

Belongs to the TPP enzyme family. In terms of assembly, homotetramer. Mg(2+) is required as a cofactor. Thiamine diphosphate serves as cofactor.

The enzyme catalyses a 2-oxocarboxylate + H(+) = an aldehyde + CO2. It carries out the reaction pyruvate + H(+) = acetaldehyde + CO2. The sequence is that of Pyruvate decarboxylase (PDC1) from Kluyveromyces marxianus (Yeast).